The following is a 453-amino-acid chain: Elongation factor 1-alpha (453 aa).

In terms of domain architecture, tr-type G spans 5–230 (KTHINIVVIG…DAIVEPKRPH (226 aa)). The interval 14-21 (GHVDAGKS) is G1. GTP is bound at residue 14 to 21 (GHVDAGKS). Residues 70–74 (GITID) form a G2 region. Residues 91 to 94 (DAPG) are G3. GTP is bound by residues 91 to 95 (DAPGH) and 153 to 156 (NKMD). A G4 region spans residues 153-156 (NKMD). The tract at residues 194 to 196 (SGW) is G5.

Belongs to the TRAFAC class translation factor GTPase superfamily. Classic translation factor GTPase family. EF-Tu/EF-1A subfamily. Binds to actin.

The protein resides in the cytoplasm. Its function is as follows. This protein promotes the GTP-dependent binding of aminoacyl-tRNA to the A-site of ribosomes during protein biosynthesis. It is also an abundant actin filament bundling protein. The polypeptide is Elongation factor 1-alpha (eef1a2) (Dictyostelium discoideum (Social amoeba)).